The chain runs to 429 residues: Gap junction gamma-2 protein (429 aa).

The Cytoplasmic portion of the chain corresponds to 1-25 (MTNMSWSFLTRLLEEIHNHSTFVGK). Residues 26–46 (VWLTVLVVFRIVLTAVGGESI) traverse the membrane as a helical segment. Over 47-78 (YSDEQTKFTCNTRQPGCDNVCYDAFAPLSHVR) the chain is Extracellular. A helical membrane pass occupies residues 79-99 (FWVFQIVVISTPSVMYLGYAV). Topologically, residues 100–214 (HRLARASQDE…EGLMRVYVAQ (115 aa)) are cytoplasmic. The tract at residues 106–200 (SQDERRRASR…GPAGQHDGRR (95 aa)) is disordered. Basic residues predominate over residues 112-123 (RASRRRPSRRAP). A compositionally biased stretch (pro residues) spans 124 to 138 (RPPLPLPPPPHPGWP). Positions 142–173 (DLGEEEPMLGLGEEDEDPGVAEGLGEDEEAED) are enriched in acidic residues. Residues 215-235 (LVARAAFEVAFLVGQYLLYGF) form a helical membrane-spanning segment. The Extracellular segment spans residues 236-263 (EVRPFFACSRQPCPHVVDCFVSRPTEKT). Residues 264-284 (VFLLVMYVVSCLCLLLNLCEM) form a helical membrane-spanning segment. Residues 285-429 (AHLGLGNAQD…SREGKTTVWI (145 aa)) lie on the Cytoplasmic side of the membrane. 2 disordered regions span residues 296 to 316 (VRGR…PPCA) and 361 to 429 (LGDL…TVWI). Positions 303–316 (PASPGPMPRPPPCA) are enriched in pro residues. At S366 the chain carries Phosphoserine. Residues 372 to 395 (LPANARGPPKPGAPASGSGSATSG) are compositionally biased toward low complexity.

This sequence belongs to the connexin family. Gamma-type subfamily. As to quaternary structure, a connexon is composed of a hexamer of connexins. Interacts with TJP1.

It localises to the cell membrane. It is found in the cell junction. Its subcellular location is the gap junction. Its function is as follows. One gap junction consists of a cluster of closely packed pairs of transmembrane channels, the connexons, through which materials of low MW diffuse from one cell to a neighboring cell. May play a role in myelination in central and peripheral nervous systems. The protein is Gap junction gamma-2 protein (GJC2) of Bos taurus (Bovine).